Consider the following 119-residue polypeptide: Large ribosomal subunit protein uL18 (119 aa).

This sequence belongs to the universal ribosomal protein uL18 family. As to quaternary structure, part of the 50S ribosomal subunit; part of the 5S rRNA/L5/L18/L25 subcomplex. Contacts the 5S and 23S rRNAs.

Functionally, this is one of the proteins that bind and probably mediate the attachment of the 5S RNA into the large ribosomal subunit, where it forms part of the central protuberance. This Desulfovibrio desulfuricans (strain ATCC 27774 / DSM 6949 / MB) protein is Large ribosomal subunit protein uL18.